We begin with the raw amino-acid sequence, 70 residues long: Large ribosomal subunit protein eL24 (70 aa).

Zn(2+)-binding residues include C6, C9, C32, and C36. The C4-type zinc finger occupies 6 to 36; sequence CSYCGRPIPPGYGIMYVRVDGVVLRFCSRRC.

It belongs to the eukaryotic ribosomal protein eL24 family. Part of the 50S ribosomal subunit. Forms a cluster with proteins L3 and L14. The cofactor is Zn(2+).

Functionally, binds to the 23S rRNA. This chain is Large ribosomal subunit protein eL24, found in Caldivirga maquilingensis (strain ATCC 700844 / DSM 13496 / JCM 10307 / IC-167).